The following is a 301-amino-acid chain: Homoserine O-acetyltransferase (301 aa).

Cys142 functions as the Acyl-thioester intermediate in the catalytic mechanism. 2 residues coordinate substrate: Lys163 and Ser192. The active-site Proton acceptor is the His235. The active site involves Glu237. Residue Arg249 participates in substrate binding.

Belongs to the MetA family.

It localises to the cytoplasm. The enzyme catalyses L-homoserine + acetyl-CoA = O-acetyl-L-homoserine + CoA. Its pathway is amino-acid biosynthesis; L-methionine biosynthesis via de novo pathway; O-acetyl-L-homoserine from L-homoserine: step 1/1. Its function is as follows. Transfers an acetyl group from acetyl-CoA to L-homoserine, forming acetyl-L-homoserine. The sequence is that of Homoserine O-acetyltransferase from Bacillus cereus (strain ATCC 14579 / DSM 31 / CCUG 7414 / JCM 2152 / NBRC 15305 / NCIMB 9373 / NCTC 2599 / NRRL B-3711).